We begin with the raw amino-acid sequence, 1220 residues long: DNA polymerase catalytic subunit (1220 aa).

Disordered stretches follow at residues 21–43 (GKRP…RPPQ) and 641–691 (QADA…KPGV). Polar residues predominate over residues 646–660 (SETSELAMDSQSHAF).

This sequence belongs to the DNA polymerase type-B family. Forms a complex with the ssDNA-binding protein, the DNA polymerase processivity factor, and the alkaline exonuclease. Interacts with the helicase-primase complex composed of the primase, the helicase and the primase-associated factor; this interaction may coordinate leading and lagging strand DNA synthesis at the replication fork.

It localises to the host nucleus. It catalyses the reaction DNA(n) + a 2'-deoxyribonucleoside 5'-triphosphate = DNA(n+1) + diphosphate. The catalysed reaction is Endonucleolytic cleavage to 5'-phosphomonoester.. Its function is as follows. Replicates viral genomic DNA. The replication complex is composed of six viral proteins: the DNA polymerase, processivity factor, primase, primase-associated factor, helicase, and ssDNA-binding protein. Additionally, the polymerase contains an intrinsic ribonuclease H (RNase H) activity that specifically degrades RNA/DNA heteroduplexes or duplex DNA substrates in the 5' to 3' direction. Therefore, it can catalyze the excision of the RNA primers that initiate the synthesis of Okazaki fragments at a replication fork during viral DNA replication. This chain is DNA polymerase catalytic subunit, found in Equus caballus (Horse).